A 253-amino-acid chain; its full sequence is Phosphate import ATP-binding protein PstB (253 aa).

Residues 7–248 (IKVRDLNLYY…PRDRRTEDYI (242 aa)) enclose the ABC transporter domain. 39–46 (GPSGCGKS) is a binding site for ATP.

Belongs to the ABC transporter superfamily. Phosphate importer (TC 3.A.1.7) family. The complex is composed of two ATP-binding proteins (PstB), two transmembrane proteins (PstC and PstA) and a solute-binding protein (PstS).

It localises to the cell membrane. It catalyses the reaction phosphate(out) + ATP + H2O = ADP + 2 phosphate(in) + H(+). In terms of biological role, part of the ABC transporter complex PstSACB involved in phosphate import. Responsible for energy coupling to the transport system. The protein is Phosphate import ATP-binding protein PstB of Carboxydothermus hydrogenoformans (strain ATCC BAA-161 / DSM 6008 / Z-2901).